Reading from the N-terminus, the 1381-residue chain is Protein HEG homolog 1 (1381 aa).

The N-terminal stretch at 1–29 is a signal peptide; sequence MASPRASRWPPPLLLLLLPLLLLPPAAPG. The disordered stretch occupies residues 24–108; that stretch reads PPAAPGTRDP…APRGGSADAA (85 aa). A compositionally biased stretch (pro residues) spans 25–37; that stretch reads PAAPGTRDPPPSP. The Extracellular segment spans residues 30-1248; it reads TRDPPPSPAR…GLNCGNPYQL (1219 aa). Low complexity predominate over residues 38 to 52; sequence ARRALSLAPLAGAGL. Over residues 55–74 the composition is skewed to basic and acidic residues; the sequence is QLERRPEREPPPTPPRERRG. O-linked (GalNAc...) threonine glycosylation is present at Thr67. Positions 93-105 are enriched in low complexity; the sequence is RGPSGRAPRGGSA. Asn123, Asn159, Asn180, and Asn314 each carry an N-linked (GlcNAc...) asparagine glycan. Low complexity predominate over residues 301–316; sequence DLSSSSESTEKLNNST. Disordered stretches follow at residues 301-325 and 376-447; these read DLSS…SVSQ and PSAV…RSVA. Polar residues predominate over residues 424–444; sequence LASSSEVQNGSPMSQTETVSR. 3 N-linked (GlcNAc...) asparagine glycosylation sites follow: Asn462, Asn520, and Asn610. Residues 491-529 are disordered; sequence STVQSGGSHTALGDRSYSESSSTSSSESLNSSAPRGERS. The segment covering 508 to 522 has biased composition (low complexity); the sequence is SESSSTSSSESLNSS. 3 disordered regions span residues 612-680, 706-757, and 774-830; these read SSYD…PLPS, SDAS…PVTS, and QTAD…TLPA. Over residues 620–648 the composition is skewed to polar residues; sequence QPSTESPVLHTSNLPSYTPTINMPNTSVV. 2 stretches are compositionally biased toward low complexity: residues 657-680 and 706-748; these read SDSS…PLPS and SDAS…PVLP. 2 stretches are compositionally biased toward polar residues: residues 774-784 and 792-809; these read QTADLKSQSTP and ESKS…TKAV. Over residues 810–825 the composition is skewed to low complexity; it reads TTNSPLPPSLTESSTE. Residues 985–1023 form the EGF-like 1 domain; the sequence is SVNSCAVNPCLHNGECVADNTSRGYHCRCPPSWQGDDCS. 6 cysteine pairs are disulfide-bonded: Cys989–Cys1000, Cys994–Cys1011, Cys1013–Cys1022, Cys1029–Cys1040, Cys1034–Cys1049, and Cys1051–Cys1062. The EGF-like 2; calcium-binding domain maps to 1025–1063; it reads DVNECLSNPCPSTAMCNNTQGSFICKCPVGYQLEKGICN. N-linked (GlcNAc...) asparagine glycosylation occurs at Asn1137. Residues 1249-1269 traverse the membrane as a helical segment; the sequence is ITVVIAAAGGGLLLILGIALI. Over 1270–1381 the chain is Cytoplasmic; sequence VTCCRKNKND…SDESRRRDYF (112 aa). Ser1359 is modified (phosphoserine).

Interacts with CCM2 and KRIT1; KRIT1 markedly facilitates interaction with CCM2.

Its subcellular location is the cell membrane. The protein resides in the cell junction. It localises to the secreted. In terms of biological role, receptor component of the CCM signaling pathway which is a crucial regulator of heart and vessel formation and integrity. May act through the stabilization of endothelial cell junctions. This chain is Protein HEG homolog 1 (HEG1), found in Homo sapiens (Human).